A 439-amino-acid polypeptide reads, in one-letter code: Xylose isomerase (439 aa).

Active-site residues include H100 and D103. The Mg(2+) site is built by E231, E267, H270, D295, D306, D308, and D338.

This sequence belongs to the xylose isomerase family. As to quaternary structure, homotetramer. Mg(2+) serves as cofactor.

Its subcellular location is the cytoplasm. The enzyme catalyses alpha-D-xylose = alpha-D-xylulofuranose. The protein is Xylose isomerase of Rhodopirellula baltica (strain DSM 10527 / NCIMB 13988 / SH1).